We begin with the raw amino-acid sequence, 541 residues long: 2-isopropylmalate synthase (541 aa).

The 277-residue stretch at 8–284 folds into the Pyruvate carboxyltransferase domain; the sequence is VIIFDTTLRD…LTNINTRHIY (277 aa). Residues D17, H208, H210, and N244 each contribute to the Mn(2+) site. Residues 408–541 form a regulatory domain region; it reads RLELVQVSCG…DQPTEVVAGS (134 aa).

This sequence belongs to the alpha-IPM synthase/homocitrate synthase family. LeuA type 1 subfamily. Homodimer. It depends on Mn(2+) as a cofactor.

Its subcellular location is the cytoplasm. The catalysed reaction is 3-methyl-2-oxobutanoate + acetyl-CoA + H2O = (2S)-2-isopropylmalate + CoA + H(+). It participates in amino-acid biosynthesis; L-leucine biosynthesis; L-leucine from 3-methyl-2-oxobutanoate: step 1/4. Its function is as follows. Catalyzes the condensation of the acetyl group of acetyl-CoA with 3-methyl-2-oxobutanoate (2-ketoisovalerate) to form 3-carboxy-3-hydroxy-4-methylpentanoate (2-isopropylmalate). The protein is 2-isopropylmalate synthase of Trichodesmium erythraeum (strain IMS101).